We begin with the raw amino-acid sequence, 308 residues long: Pantothenate synthetase (308 aa).

39-46 (MGALHDGH) serves as a coordination point for ATP. His-46 (proton donor) is an active-site residue. Gln-71 provides a ligand contact to (R)-pantoate. Gln-71 contributes to the beta-alanine binding site. ATP is bound at residue 157 to 160 (GEKD). Residue Gln-163 participates in (R)-pantoate binding. ATP is bound by residues Val-186 and 194–197 (MSSR). A disordered region spans residues 286–308 (IETPAGTAGPDGDRQYAQSPWRN).

This sequence belongs to the pantothenate synthetase family. Homodimer.

The protein localises to the cytoplasm. It catalyses the reaction (R)-pantoate + beta-alanine + ATP = (R)-pantothenate + AMP + diphosphate + H(+). The protein operates within cofactor biosynthesis; (R)-pantothenate biosynthesis; (R)-pantothenate from (R)-pantoate and beta-alanine: step 1/1. Functionally, catalyzes the condensation of pantoate with beta-alanine in an ATP-dependent reaction via a pantoyl-adenylate intermediate. The chain is Pantothenate synthetase from Mycolicibacterium paratuberculosis (strain ATCC BAA-968 / K-10) (Mycobacterium paratuberculosis).